A 468-amino-acid chain; its full sequence is Chromosomal replication initiator protein DnaA (468 aa).

The segment at 1-90 (MTQEKWGLLC…NSPMRPARAA (90 aa)) is domain I, interacts with DnaA modulators. The domain II stretch occupies residues 91 to 126 (RPAAAAAAAAAAVEAPQVSAPRATDTSDVLDGLQAA). Residues 127-348 (PLDPRFTFDS…GALTRLFAFA (222 aa)) are domain III, AAA+ region. Residues Gly171, Gly173, Lys174, and Thr175 each contribute to the ATP site. The segment at 349–468 (SLVGREIDME…VEMLRRALEA (120 aa)) is domain IV, binds dsDNA.

It belongs to the DnaA family. Oligomerizes as a right-handed, spiral filament on DNA at oriC.

It is found in the cytoplasm. Functionally, plays an essential role in the initiation and regulation of chromosomal replication. ATP-DnaA binds to the origin of replication (oriC) to initiate formation of the DNA replication initiation complex once per cell cycle. Binds the DnaA box (a 9 base pair repeat at the origin) and separates the double-stranded (ds)DNA. Forms a right-handed helical filament on oriC DNA; dsDNA binds to the exterior of the filament while single-stranded (ss)DNA is stabiized in the filament's interior. The ATP-DnaA-oriC complex binds and stabilizes one strand of the AT-rich DNA unwinding element (DUE), permitting loading of DNA polymerase. After initiation quickly degrades to an ADP-DnaA complex that is not apt for DNA replication. Binds acidic phospholipids. The chain is Chromosomal replication initiator protein DnaA from Ruegeria pomeroyi (strain ATCC 700808 / DSM 15171 / DSS-3) (Silicibacter pomeroyi).